Reading from the N-terminus, the 259-residue chain is Small ribosomal subunit protein uS2 (259 aa).

It belongs to the universal ribosomal protein uS2 family.

The polypeptide is Small ribosomal subunit protein uS2 (Dinoroseobacter shibae (strain DSM 16493 / NCIMB 14021 / DFL 12)).